We begin with the raw amino-acid sequence, 2843 residues long: Adenomatous polyposis coli protein (2843 aa).

A2 is subject to N-acetylalanine. Residues A2–A61 adopt a coiled-coil conformation. 2 positions are modified to phosphoserine: S107 and S111. Residues S127 to N248 are a coiled coil. The disordered stretch occupies residues A239–T305. Residues E241–N261 show a composition bias toward basic and acidic residues. Residues M271 to T282 are compositionally biased toward polar residues. Low complexity predominate over residues S290–S299. ARM repeat units follow at residues L453 to I495, L505 to V547, L548 to A591, L592 to I638, L639 to T683, L684 to A725, and L726 to Q767. Phosphoserine is present on residues S744, S748, and S780. A disordered region spans residues T828–L878. Residues S833–S843 show a composition bias toward low complexity. Residues S844 to G857 show a composition bias toward basic and acidic residues. The span at N869 to L878 shows a compositional bias: polar residues. A Phosphoserine modification is found at S908. 2 disordered regions span residues R923–S943 and R958–S987. Residues A927 to S943 show a composition bias toward polar residues. The responsible for down-regulation through a process mediated by direct ubiquitination stretch occupies residues S960–L1337. Residues N961–D971 show a composition bias toward low complexity. 3 positions are modified to phosphoserine: S987, S1038, and S1042. Residues E1020–E1169 form an interaction with catenins region. Disordered regions lie at residues V1099 to E1169, S1190 to Q1244, and I1311 to Y1376. The segment covering A1107 to C1130 has biased composition (polar residues). Residues R1146–P1159 show a composition bias toward basic and acidic residues. The segment covering S1190 to N1224 has biased composition (low complexity). Polar residues predominate over residues A1225 to Q1244. Low complexity-rich tracts occupy residues S1335–E1345 and S1355–A1366. 5 positions are modified to phosphoserine: S1360, S1371, S1385, S1392, and S1395. Disordered regions lie at residues S1403–A1475, P1526–D1569, M1583–Q1611, S1664–K1717, and N1729–G1836. Residue T1438 is modified to Phosphothreonine. Composition is skewed to basic and acidic residues over residues T1448–G1466 and E1540–L1564. At S1567 the chain carries Phosphoserine. The segment covering E1683–D1698 has biased composition (basic and acidic residues). The span at G1735 to K1744 shows a compositional bias: basic residues. At S1774 the chain carries Phosphoserine. 2 stretches are compositionally biased toward basic and acidic residues: residues Y1785 to D1794 and V1804 to K1813. A phosphoserine mark is found at S1861, S1863, and S1864. The highly charged stretch occupies residues D1866–K1893. A compositionally biased stretch (basic and acidic residues) spans L1881–S1896. 3 disordered regions span residues L1881 to K1950, H1965 to S2011, and I2043 to L2072. 2 stretches are compositionally biased toward polar residues: residues H1897 to I1913 and Q1928 to K1938. Residues D1939–K1950 show a composition bias toward basic and acidic residues. S1971 and S1973 each carry phosphoserine. Residues N1979–E1991 show a composition bias toward basic and acidic residues. Residues E2035–D2059 form an interaction with AXIN1 region. Phosphoserine is present on residues S2088, S2093, S2125, S2129, S2130, and S2132. Disordered stretches follow at residues P2147–T2635 and N2667–R2714. T2151 is modified (phosphothreonine). The segment at I2167–S2674 is basic region. Residues K2169–G2187 are compositionally biased toward basic and acidic residues. Polar residues-rich tracts occupy residues V2203–S2223 and A2257–P2271. S2260, S2270, and S2283 each carry phosphoserine. Positions A2286–P2331 are enriched in polar residues. Residues T2348–P2369 are compositionally biased toward low complexity. Polar residues-rich tracts occupy residues G2370–G2409 and R2418–S2427. The span at S2459–S2477 shows a compositional bias: low complexity. S2473 and S2535 each carry phosphoserine. The interval T2475 to V2843 is interaction with DLG1. Residues N2518–S2535 show a composition bias toward basic and acidic residues. A compositionally biased stretch (polar residues) spans S2555–G2568. S2569 carries the post-translational modification Phosphoserine. The segment covering S2569–E2579 has biased composition (low complexity). A compositionally biased stretch (basic and acidic residues) spans S2580 to V2592. 3 stretches are compositionally biased toward polar residues: residues N2593 to A2608, F2620 to T2635, and N2668 to T2679. A phosphoserine mark is found at S2671 and S2674. The interaction with MAPRE1 stretch occupies residues S2674 to V2843. T2679 is subject to Phosphothreonine. A phosphoserine mark is found at S2710 and S2724. The segment at D2729–V2843 is disordered. The span at G2741–V2757 shows a compositional bias: polar residues. Over residues S2763–S2774 the composition is skewed to low complexity. The span at F2784–N2812 shows a compositional bias: polar residues. S2789 is subject to Phosphoserine. The Microtubule tip localization signal motif lies at S2803 to P2806. The PDZ-binding signature appears at T2841–V2843.

Belongs to the adenomatous polyposis coli (APC) family. In terms of assembly, forms homooligomers. Found in a complex consisting of ARHGEF4, APC and CTNNB1. Found in a complex composed of MACF1, APC, AXIN1, CTNNB1 and GSK3B. The complex composed, at least, of APC, CTNNB1 and GSK3B interacts with JPT1; the interaction requires the inactive form of GSK3B (phosphorylated at 'Ser-9'). Interacts with APC2. Interacts with DLG1 (via PDZ domains) and DLG3 (via PDZ domains). Interacts with alpha- and beta-catenins. Interacts with AXIN1 (via RGS domain). Interacts with ARHGEF4 (via N-terminus). Interacts (via C-terminal residues 2674-2843) with MAPRE1 (via C-terminal residues 206-211); the interaction inhibits association with and bundling of F-actin. Interacts with MAPRE2 and MAPRE3 (via C-terminus). Interacts with DIAPH1; DIAPH1 acts as a scaffold protein for MAPRE1 and APC to stabilize microtubules and promote cell migration. Interacts with DIAPH2. Interacts with SCRIB; may mediate APC targeting to adherens junctions of epithelial cells. Interacts with SPATA13 (via N-terminus and SH3 domain). Interacts with ASAP1 (via SH3 domain). Interacts (at the cell membrane) with AMER1 and AMER2 (via ARM repeats). Interacts with KHDRBS1. Interacts with actin; binds both to F-actin and actin filament bundles. Post-translationally, phosphorylated; phosphorylation enhances the F-actin bundling activity. Phosphorylated by GSK3B. In terms of processing, ubiquitinated, leading to its degradation by the proteasome. Ubiquitination is facilitated by Axin. Deubiquitinated by ZRANB1/TRABID. Expressed in a variety of tissues: brain, small intestine, colon, thymus, skeletal muscle, heart, prostate, lung, spleen, ovary, testis kidney, placenta, blood and liver. Isoform 1A: Very strongly expressed in brain but has relatively low expression levels in other tissues. Isoform 1B: Predominant form in all tissues except for brain, including gastric mucosa and blood.

It is found in the cell junction. Its subcellular location is the adherens junction. The protein localises to the cytoplasm. It localises to the cytoskeleton. The protein resides in the cell projection. It is found in the lamellipodium. Its subcellular location is the ruffle membrane. The protein localises to the cell membrane. Its function is as follows. Tumor suppressor. Promotes rapid degradation of CTNNB1 and participates in Wnt signaling as a negative regulator. APC activity is correlated with its phosphorylation state. Activates the GEF activity of SPATA13 and ARHGEF4. Plays a role in hepatocyte growth factor (HGF)-induced cell migration. Required for MMP9 up-regulation via the JNK signaling pathway in colorectal tumor cells. Associates with both microtubules and actin filaments, components of the cytoskeleton. Plays a role in mediating the organization of F-actin into ordered bundles. Functions downstream of Rho GTPases and DIAPH1 to selectively stabilize microtubules. Acts as a mediator of ERBB2-dependent stabilization of microtubules at the cell cortex. It is required for the localization of MACF1 to the cell membrane and this localization of MACF1 is critical for its function in microtubule stabilization. In Homo sapiens (Human), this protein is Adenomatous polyposis coli protein.